A 205-amino-acid polypeptide reads, in one-letter code: High frequency lysogenization protein HflD homolog (205 aa).

Belongs to the HflD family.

The protein resides in the cytoplasm. Its subcellular location is the cell inner membrane. The protein is High frequency lysogenization protein HflD homolog of Vibrio cholerae serotype O1 (strain ATCC 39541 / Classical Ogawa 395 / O395).